Reading from the N-terminus, the 637-residue chain is 1-deoxy-D-xylulose-5-phosphate synthase (637 aa).

Thiamine diphosphate-binding positions include His-72 and 113 to 115 (GHA). Asp-144 provides a ligand contact to Mg(2+). Residues 145 to 146 (GA), Asn-174, Tyr-287, and Glu-370 contribute to the thiamine diphosphate site. Asn-174 provides a ligand contact to Mg(2+).

This sequence belongs to the transketolase family. DXPS subfamily. In terms of assembly, homodimer. The cofactor is Mg(2+). Requires thiamine diphosphate as cofactor.

The enzyme catalyses D-glyceraldehyde 3-phosphate + pyruvate + H(+) = 1-deoxy-D-xylulose 5-phosphate + CO2. The protein operates within metabolic intermediate biosynthesis; 1-deoxy-D-xylulose 5-phosphate biosynthesis; 1-deoxy-D-xylulose 5-phosphate from D-glyceraldehyde 3-phosphate and pyruvate: step 1/1. In terms of biological role, catalyzes the acyloin condensation reaction between C atoms 2 and 3 of pyruvate and glyceraldehyde 3-phosphate to yield 1-deoxy-D-xylulose-5-phosphate (DXP). This chain is 1-deoxy-D-xylulose-5-phosphate synthase, found in Prochlorococcus marinus subsp. pastoris (strain CCMP1986 / NIES-2087 / MED4).